A 589-amino-acid polypeptide reads, in one-letter code: Serine/threonine-protein kinase STE7 homolog (589 aa).

The span at 1 to 18 (MTRTTRIDTQEATKHKDL) shows a compositional bias: basic and acidic residues. 2 disordered regions span residues 1–162 (MTRT…DPDN) and 185–232 (RQHY…PASS). Low complexity predominate over residues 24–33 (PLSLSSNPNP). A compositionally biased stretch (polar residues) spans 57 to 69 (VKSTSGSLRSSDM). The span at 92–121 (PTASSSATSTPTSNITGSSSASSIQFAQKS) shows a compositional bias: low complexity. Polar residues-rich tracts occupy residues 127–136 (IVSQTLSRPS) and 144–162 (SGYS…DPDN). Residues 185–203 (RQHYQNSHHHLPTTNRKRQ) are compositionally biased toward basic residues. The span at 206–220 (ISSISPTKSSAASSP) shows a compositional bias: low complexity. The Protein kinase domain maps to 249-565 (LLTLKQLGSG…QLLEDKEHFF (317 aa)). ATP-binding positions include 255-263 (LGSGNSGSV) and K278. D374 serves as the catalytic Proton acceptor. S402 is subject to Phosphoserine. Position 408 is a phosphothreonine (T408). The segment at 473 to 499 (IAAERNGQNSPSRSRKNKQKGNGYNSY) is disordered.

It belongs to the protein kinase superfamily. STE Ser/Thr protein kinase family. MAP kinase kinase subfamily.

The enzyme catalyses L-seryl-[protein] + ATP = O-phospho-L-seryl-[protein] + ADP + H(+). The catalysed reaction is L-threonyl-[protein] + ATP = O-phospho-L-threonyl-[protein] + ADP + H(+). It catalyses the reaction L-tyrosyl-[protein] + ATP = O-phospho-L-tyrosyl-[protein] + ADP + H(+). This is Serine/threonine-protein kinase STE7 homolog (HST7) from Candida albicans (strain WO-1) (Yeast).